The following is a 134-amino-acid chain: Small ribosomal subunit protein uS8c (134 aa).

It belongs to the universal ribosomal protein uS8 family. As to quaternary structure, part of the 30S ribosomal subunit.

It is found in the plastid. The protein resides in the chloroplast. Functionally, one of the primary rRNA binding proteins, it binds directly to 16S rRNA central domain where it helps coordinate assembly of the platform of the 30S subunit. This is Small ribosomal subunit protein uS8c (rps8) from Eucalyptus globulus subsp. globulus (Tasmanian blue gum).